Here is a 225-residue protein sequence, read N- to C-terminus: NAD(P)H-quinone oxidoreductase subunit K, chloroplastic (225 aa).

[4Fe-4S] cluster contacts are provided by Cys43, Cys44, Cys108, and Cys139.

Belongs to the complex I 20 kDa subunit family. In terms of assembly, NDH is composed of at least 16 different subunits, 5 of which are encoded in the nucleus. [4Fe-4S] cluster is required as a cofactor.

Its subcellular location is the plastid. It localises to the chloroplast thylakoid membrane. The catalysed reaction is a plastoquinone + NADH + (n+1) H(+)(in) = a plastoquinol + NAD(+) + n H(+)(out). It catalyses the reaction a plastoquinone + NADPH + (n+1) H(+)(in) = a plastoquinol + NADP(+) + n H(+)(out). Functionally, NDH shuttles electrons from NAD(P)H:plastoquinone, via FMN and iron-sulfur (Fe-S) centers, to quinones in the photosynthetic chain and possibly in a chloroplast respiratory chain. The immediate electron acceptor for the enzyme in this species is believed to be plastoquinone. Couples the redox reaction to proton translocation, and thus conserves the redox energy in a proton gradient. The sequence is that of NAD(P)H-quinone oxidoreductase subunit K, chloroplastic from Lemna minor (Common duckweed).